Consider the following 412-residue polypeptide: MTEVNTQPEVNIGLVGHVDHGKTTLVQALSGSWTDQHSEEMKRGISIRLGYADATFRRCPGVDAPECYTVDEECEDGSESEPIRTVSFVDAPGHETLMATMLSGASIMDGAVLVVSATEDVPQAQTEEHLMALDLIGIENIVIAQNKVDLVDRDRAVDNYRQIQEFVEGTVAEDAPIVPVSAQQEVNMDLLIDAIESEIPTPDRDPGESARMYAARSFDINRPGATAAELKGGVVGGSLVSGELSVGDGLEIRPGREVDEEGQTEWRPLETTVRSLQAGSNDVESARPGGLLGVGTGLDPSLTKGDALAGQVAGEPGTLPPTRNEFEMQVDLLDRVIGSEEGDDGDVEDINTGEPLMLTVGTATTVGAVTSAREGECEVSLKRPVCAEKGAQIAINRRVGARWRLIGVGTLS.

The region spanning 7–203 (QPEVNIGLVG…AIESEIPTPD (197 aa)) is the tr-type G domain. The interval 16–23 (GHVDHGKT) is G1. Positions 19, 23, 44, and 46 each coordinate Mg(2+). 19–24 (DHGKTT) is a binding site for GTP. Positions 44–48 (GISIR) are G2. The tract at residues 90-93 (DAPG) is G3. GTP-binding positions include 146–149 (NKVD) and 181–183 (SAQ). Positions 146–149 (NKVD) are G4. A G5 region spans residues 181–183 (SAQ).

This sequence belongs to the TRAFAC class translation factor GTPase superfamily. Classic translation factor GTPase family. EIF2G subfamily. In terms of assembly, heterotrimer composed of an alpha, a beta and a gamma chain. Mg(2+) serves as cofactor.

The enzyme catalyses GTP + H2O = GDP + phosphate + H(+). Its function is as follows. eIF-2 functions in the early steps of protein synthesis by forming a ternary complex with GTP and initiator tRNA. This is Translation initiation factor 2 subunit gamma from Halorubrum lacusprofundi (strain ATCC 49239 / DSM 5036 / JCM 8891 / ACAM 34).